We begin with the raw amino-acid sequence, 734 residues long: Photosystem I P700 chlorophyll a apoprotein A2 (734 aa).

A run of 8 helical transmembrane segments spans residues 46 to 69, 135 to 158, 175 to 199, 273 to 291, 330 to 353, 369 to 395, 417 to 439, and 517 to 535; these read IFASHFGQLAIIFLWTSGNLFHVA, LYTGALFLLFLSAISLIGGWLHLQ, LNHHLSGLFGVSSLAWTGHLVHVAI, IAHHHLAIAILFLIAGHMY, IHFQLGLALASLGVITSLVAQHMY, AALYTHHQYIAGFIMTGAFAHGAIFFI, AIISHLSWASLFLGFHTLGLYVH, and FLVHHAIALGLHTTTLILV. [4Fe-4S] cluster contacts are provided by C559 and C568. Helical transmembrane passes span 575–596 and 643–665; these read AFYLAVFWMLNTIGWVTFYWHW and LSVWAWMFLFGHLVWATGFMFLI. Chlorophyll a-binding residues include H654, M662, and Y670. W671 lines the phylloquinone pocket. A helical membrane pass occupies residues 707–727; sequence LVGLAHFSVGYIFTYAAFLIA.

This sequence belongs to the PsaA/PsaB family. As to quaternary structure, the PsaA/B heterodimer binds the P700 chlorophyll special pair and subsequent electron acceptors. PSI consists of a core antenna complex that captures photons, and an electron transfer chain that converts photonic excitation into a charge separation. The eukaryotic PSI reaction center is composed of at least 11 subunits. Requires P700 is a chlorophyll a/chlorophyll a' dimer, A0 is one or more chlorophyll a, A1 is one or both phylloquinones and FX is a shared 4Fe-4S iron-sulfur center. as cofactor.

The protein resides in the plastid. Its subcellular location is the chloroplast thylakoid membrane. The enzyme catalyses reduced [plastocyanin] + hnu + oxidized [2Fe-2S]-[ferredoxin] = oxidized [plastocyanin] + reduced [2Fe-2S]-[ferredoxin]. PsaA and PsaB bind P700, the primary electron donor of photosystem I (PSI), as well as the electron acceptors A0, A1 and FX. PSI is a plastocyanin-ferredoxin oxidoreductase, converting photonic excitation into a charge separation, which transfers an electron from the donor P700 chlorophyll pair to the spectroscopically characterized acceptors A0, A1, FX, FA and FB in turn. Oxidized P700 is reduced on the lumenal side of the thylakoid membrane by plastocyanin. The chain is Photosystem I P700 chlorophyll a apoprotein A2 from Aethionema grandiflorum (Persian stone-cress).